Reading from the N-terminus, the 373-residue chain is Eukaryotic translation initiation factor 3 subunit M (373 aa).

Ser-2 carries the N-acetylserine modification. 2 positions are modified to phosphoserine: Ser-2 and Ser-152. In terms of domain architecture, PCI spans 180 to 338; that stretch reads AASKVMVELL…RKVVVSHSTH (159 aa). An N6-acetyllysine modification is found at Lys-253. Position 366 is a phosphoserine (Ser-366).

The protein belongs to the eIF-3 subunit M family. In terms of assembly, component of the eukaryotic translation initiation factor 3 (eIF-3) complex, which is composed of 13 subunits: EIF3A, EIF3B, EIF3C, EIF3D, EIF3E, EIF3F, EIF3G, EIF3H, EIF3I, EIF3J, EIF3K, EIF3L and EIF3M. The eIF-3 complex appears to include 3 stable modules: module A is composed of EIF3A, EIF3B, EIF3G and EIF3I; module B is composed of EIF3F, EIF3H, and EIF3M; and module C is composed of EIF3C, EIF3D, EIF3E, EIF3K and EIF3L. EIF3C of module C binds EIF3B of module A and EIF3H of module B, thereby linking the three modules. EIF3J is a labile subunit that binds to the eIF-3 complex via EIF3B. The eIF-3 complex interacts with RPS6KB1 under conditions of nutrient depletion. Mitogenic stimulation leads to binding and activation of a complex composed of MTOR and RPTOR, leading to phosphorylation and release of RPS6KB1 and binding of EIF4B to eIF-3.

The protein resides in the cytoplasm. Functionally, component of the eukaryotic translation initiation factor 3 (eIF-3) complex, which is required for several steps in the initiation of protein synthesis. The eIF-3 complex associates with the 40S ribosome and facilitates the recruitment of eIF-1, eIF-1A, eIF-2:GTP:methionyl-tRNAi and eIF-5 to form the 43S pre-initiation complex (43S PIC). The eIF-3 complex stimulates mRNA recruitment to the 43S PIC and scanning of the mRNA for AUG recognition. The eIF-3 complex is also required for disassembly and recycling of post-termination ribosomal complexes and subsequently prevents premature joining of the 40S and 60S ribosomal subunits prior to initiation. The eIF-3 complex specifically targets and initiates translation of a subset of mRNAs involved in cell proliferation, including cell cycling, differentiation and apoptosis, and uses different modes of RNA stem-loop binding to exert either translational activation or repression. The chain is Eukaryotic translation initiation factor 3 subunit M from Bos taurus (Bovine).